A 353-amino-acid polypeptide reads, in one-letter code: MTLEAIRYRSGSLQILNQLLLPRETVYDEIRSVRDGYEAIKSMKVRGAPAIAIVGCLSLAVELRAGAGAEDLVSFVRDSLCHLTSARPTAVNMGRAARELMEFTENESMEKNTEQLRDSVIGWIEEMLERDVNDNKKIGNYGAQHILSGVPRDSVTILTHCNTGSLATAGYGTALGVVRSLHMLGRLKRLYCTETRPYNQGARLTAYEAVAEGFPATLITDSMAALAMREKSITAVVVGADRVVANGDTANKVGTYQLAIAAKHHGIPFYVAAPSTSCDLSLESGRDIVIEERPAEELTSINGVPVAAPGIDVWNPAFDVTPHQLITGGIITELGVFLPSELQAALTGRLTAL.

Aspartate 241 (proton donor) is an active-site residue.

It belongs to the eIF-2B alpha/beta/delta subunits family. MtnA subfamily.

It localises to the cytoplasm. It is found in the nucleus. The enzyme catalyses 5-(methylsulfanyl)-alpha-D-ribose 1-phosphate = 5-(methylsulfanyl)-D-ribulose 1-phosphate. It functions in the pathway amino-acid biosynthesis; L-methionine biosynthesis via salvage pathway; L-methionine from S-methyl-5-thio-alpha-D-ribose 1-phosphate: step 1/6. Catalyzes the interconversion of methylthioribose-1-phosphate (MTR-1-P) into methylthioribulose-1-phosphate (MTRu-1-P). The sequence is that of Methylthioribose-1-phosphate isomerase (mri1) from Danio rerio (Zebrafish).